The primary structure comprises 271 residues: Ribosomal RNA small subunit methyltransferase A (271 aa).

S-adenosyl-L-methionine contacts are provided by Asn-18, Leu-20, Gly-45, Glu-66, Asp-91, and Asn-112.

The protein belongs to the class I-like SAM-binding methyltransferase superfamily. rRNA adenine N(6)-methyltransferase family. RsmA subfamily.

The protein resides in the cytoplasm. It carries out the reaction adenosine(1518)/adenosine(1519) in 16S rRNA + 4 S-adenosyl-L-methionine = N(6)-dimethyladenosine(1518)/N(6)-dimethyladenosine(1519) in 16S rRNA + 4 S-adenosyl-L-homocysteine + 4 H(+). In terms of biological role, specifically dimethylates two adjacent adenosines (A1518 and A1519) in the loop of a conserved hairpin near the 3'-end of 16S rRNA in the 30S particle. May play a critical role in biogenesis of 30S subunits. The chain is Ribosomal RNA small subunit methyltransferase A from Vibrio atlanticus (strain LGP32) (Vibrio splendidus (strain Mel32)).